Here is a 226-residue protein sequence, read N- to C-terminus: MYAVKLNKDTLLPREKLVQYGVEQLSHQELLAILLRTGNKEKHVMELASHILHCLESLADFDKLSLQELQQLPGIGKVKAIELKAMVELCHRIQKAKSSHSIQILSSYQVAKRMMHELGDKKQEHLIAIYLDTQNRIIEEKTIFIGSVRRSIAEPREILHFACRNMATSLIVVHNHPSGLTNPSENDVAFTKKIKRSCDHLGINCLDHIIVGKKQYYSFREKSDIF.

The MPN domain occupies 103-225 (QILSSYQVAK…YYSFREKSDI (123 aa)). Zn(2+) contacts are provided by histidine 174, histidine 176, and aspartate 187. Positions 174–187 (HNHPSGLTNPSEND) match the JAMM motif motif.

This sequence belongs to the UPF0758 family.

In Streptococcus uberis (strain ATCC BAA-854 / 0140J), this protein is UPF0758 protein SUB0843.